The following is a 208-amino-acid chain: PITH domain-containing protein ZK353.9 (208 aa).

The PITH domain occupies 17 to 189 (EVPGDDVYRY…RIAIATYESR (173 aa)).

This sequence belongs to the PITHD1 family.

This chain is PITH domain-containing protein ZK353.9, found in Caenorhabditis elegans.